The chain runs to 373 residues: Probable cysteine protease RD19C (373 aa).

Positions methionine 1–glycine 20 are cleaved as a signal peptide. The propeptide at serine 21–aspartate 139 is activation peptide. Cystine bridges form between cysteine 161/cysteine 211 and cysteine 195/cysteine 245. Cysteine 164 is an active-site residue. Asparagine 258 carries N-linked (GlcNAc...) asparagine glycosylation. Cysteines 301 and 356 form a disulfide. Catalysis depends on residues histidine 307 and asparagine 334.

The protein belongs to the peptidase C1 family.

The protein resides in the lytic vacuole. In terms of biological role, probable thiol protease. The polypeptide is Probable cysteine protease RD19C (Arabidopsis thaliana (Mouse-ear cress)).